A 140-amino-acid polypeptide reads, in one-letter code: Vacuolar protein sorting-associated protein 55 homolog (140 aa).

Residues 1–16 (MADVPGYLRTCLDMGK) are Cytoplasmic-facing. The chain crosses the membrane as a helical span at residues 17–37 (IAFLAILVSTGIVLQILACAL). Topologically, residues 38 to 40 (FNN) are lumenal. A helical membrane pass occupies residues 41–61 (WWPMLSVIMYVLLPMPLLFFG). At 62 to 75 (GSDSTSLFNESDNS) the chain is on the cytoplasmic side. Residues 76–98 (WINAAKFLTGASAVGSVAIPSIL) traverse the membrane as a helical segment. At 99–108 (KHAGLIGWGA) the chain is on the lumenal side. A helical transmembrane segment spans residues 109 to 129 (LALDLSSYVVFLVAILGYICI). Over 130–140 (GDASDNYYSYI) the chain is Cytoplasmic.

It belongs to the OB-RGRP/VPS55 family.

It is found in the endosome membrane. Its function is as follows. Involved in endosomal protein transport. This Arabidopsis thaliana (Mouse-ear cress) protein is Vacuolar protein sorting-associated protein 55 homolog.